Consider the following 271-residue polypeptide: uncharacterized protein (271 aa).

This is an uncharacterized protein from Galliformes (FAdV-1).